The sequence spans 427 residues: Alpha/beta hydrolase gkaG (427 aa).

Asp-368 is a catalytic residue.

Belongs to the AB hydrolase superfamily. In terms of assembly, homodimer.

The protein operates within mycotoxin biosynthesis. Functionally, alpha/beta hydrolase; part of the gene cluster that mediates the biosynthesis of GKK1032, fungal natural products containing a macrocyclic para-cyclophane connected to a decahydrofluorene ring system that show potent antitumor activities. Within the pathway, gkaG catalyzes the Knoevenagel condensation that affords the 3-pyrrolin-2-one ring, using as substrate the polyketide-tyrosyl acyl thioester product of gkaA. The pathway begins with the PKS-NRPS gkaA which, with the help of the trans-enoyl reductase gkaC, synthesizes the polyketide-tyrosyl acyl thioester product which can be reductively off-loaded by the terminal reductase (R) domain in gkaA. The alpha/beta hydrolase gkaG is then required to catalyze the subsequent Knoevenagel condensation that affords the 3-pyrrolin-2-one ring, whereas the three proteins gkaB, gkaX and gkaZ then function synergistically to form the cyclophane. The polypeptide is Alpha/beta hydrolase gkaG (Penicillium citrinum).